The chain runs to 32 residues: CSYPSKLCNNHRANVNQQRMQQKLIRQQMVER.

Its subcellular location is the secreted. This is Secreted protein F2 from Globisporangium hypogynum (Pythium hypogynum).